A 99-amino-acid chain; its full sequence is Protein MOST-1 (99 aa).

In terms of assembly, interacts with TSPO, IGHM and IGHD. In terms of tissue distribution, expressed in the heart, kidney, liver, pancreas, small intestine, ovary, testis, prostate and thymus. Expressed in all of the cancer cell lines tested.

It is found in the cytoplasm. The protein localises to the microsome membrane. Its subcellular location is the endoplasmic reticulum membrane. Functionally, may be involved in cell survival, proliferation and progression of cancer cells. This is Protein MOST-1 (C8orf17) from Homo sapiens (Human).